A 413-amino-acid chain; its full sequence is cAMP-dependent protein kinase regulatory subunit (413 aa).

The tract at residues 1–145 is disordered; that stretch reads MADSSSFPGT…DSWTPPCHPK (145 aa). The tract at residues 24–161 is dimerization and phosphorylation; sequence SPIQKISEEE…RLKTAVSNNF (138 aa). A compositionally biased stretch (low complexity) spans 58–67; it reads GNSFNGDNGS. The segment covering 121–138 has biased composition (polar residues); it reads TSVSAESLNPTSAGSDSW. Position 122 is a phosphoserine (serine 122). 3',5'-cyclic AMP contacts are provided by residues 162–291, glutamate 240, arginine 249, 294–413, glutamate 361, and arginine 370; these read LFSH…FLEE and LLSS…PSPS.

This sequence belongs to the cAMP-dependent kinase regulatory chain family. As to quaternary structure, tetramer, composed of 2 regulatory (R) and 2 catalytic (C) subunits. In the presence of cAMP it dissociates into 2 active monomeric C subunits and an R dimer.

The protein is cAMP-dependent protein kinase regulatory subunit (pkaR) of Aspergillus fumigatus (strain ATCC MYA-4609 / CBS 101355 / FGSC A1100 / Af293) (Neosartorya fumigata).